The primary structure comprises 229 residues: Enolase-phosphatase E1 (229 aa).

This sequence belongs to the HAD-like hydrolase superfamily. MasA/MtnC family. As to quaternary structure, monomer. Requires Mg(2+) as cofactor.

It carries out the reaction 5-methylsulfanyl-2,3-dioxopentyl phosphate + H2O = 1,2-dihydroxy-5-(methylsulfanyl)pent-1-en-3-one + phosphate. It participates in amino-acid biosynthesis; L-methionine biosynthesis via salvage pathway; L-methionine from S-methyl-5-thio-alpha-D-ribose 1-phosphate: step 3/6. Its pathway is amino-acid biosynthesis; L-methionine biosynthesis via salvage pathway; L-methionine from S-methyl-5-thio-alpha-D-ribose 1-phosphate: step 4/6. Its function is as follows. Bifunctional enzyme that catalyzes the enolization of 2,3-diketo-5-methylthiopentyl-1-phosphate (DK-MTP-1-P) into the intermediate 2-hydroxy-3-keto-5-methylthiopentenyl-1-phosphate (HK-MTPenyl-1-P), which is then dephosphorylated to form the acireductone 1,2-dihydroxy-3-keto-5-methylthiopentene (DHK-MTPene). In Yersinia pseudotuberculosis serotype IB (strain PB1/+), this protein is Enolase-phosphatase E1.